A 235-amino-acid chain; its full sequence is Large ribosomal subunit protein uL1 (235 aa).

The protein belongs to the universal ribosomal protein uL1 family. Part of the 50S ribosomal subunit.

Binds directly to 23S rRNA. The L1 stalk is quite mobile in the ribosome, and is involved in E site tRNA release. Functionally, protein L1 is also a translational repressor protein, it controls the translation of the L11 operon by binding to its mRNA. This Mycobacterium bovis (strain ATCC BAA-935 / AF2122/97) protein is Large ribosomal subunit protein uL1.